Reading from the N-terminus, the 517-residue chain is Zinc finger protein 215 (517 aa).

The 79-residue stretch at Arg48–Val126 folds into the SCAN box domain. Positions Val164–Phe237 constitute a KRAB domain. 4 C2H2-type zinc fingers span residues Tyr379–His401, Tyr407–His429, Tyr462–His484, and Phe490–His512.

The protein belongs to the krueppel C2H2-type zinc-finger protein family.

It localises to the nucleus. In terms of biological role, may be involved in transcriptional regulation. The polypeptide is Zinc finger protein 215 (ZNF215) (Homo sapiens (Human)).